A 597-amino-acid chain; its full sequence is Arginine--tRNA ligase (597 aa).

The short motif at 125–135 (PNTNKPLHLGH) is the 'HIGH' region element.

Belongs to the class-I aminoacyl-tRNA synthetase family. As to quaternary structure, monomer.

It localises to the cytoplasm. It catalyses the reaction tRNA(Arg) + L-arginine + ATP = L-arginyl-tRNA(Arg) + AMP + diphosphate. The protein is Arginine--tRNA ligase of Porphyromonas gingivalis (strain ATCC BAA-308 / W83).